Here is a 197-residue protein sequence, read N- to C-terminus: Adenylate kinase (197 aa).

7-15 is a binding site for ATP; that stretch reads ALPGSGKTT.

The protein belongs to the archaeal adenylate kinase family.

The protein resides in the cytoplasm. The enzyme catalyses AMP + ATP = 2 ADP. The chain is Adenylate kinase (adkA) from Pyrobaculum aerophilum (strain ATCC 51768 / DSM 7523 / JCM 9630 / CIP 104966 / NBRC 100827 / IM2).